The sequence spans 508 residues: Cytochrome P450 monooxygenase orf4 (508 aa).

C447 is a binding site for heme.

This sequence belongs to the cytochrome P450 family. It depends on heme as a cofactor.

It participates in mycotoxin biosynthesis. Functionally, cytochrome P450 monooxygenase; part of the gene cluster that mediates the biosynthesis of brefeldin A (BFA), a protein transport inhibitor that shows antiviral, antifungal, and antitumor properties. The proposed biosynthesis of BFA involves formation of an acyclic polyketide chain that is differentially tailored throughout the backbone. The highly reducing polyketide synthase Bref-PKS is proposed to synthesize the precisely reduced octaketide precursor, which could then be directly offloaded by the thiohydrolase enzyme Bref-TH followed by a cytochrome P450 monooxygenase-mediated formation of the cyclopentane ring and macrocyclization to afford 7-deoxy BFA. Alternatively, the first ring annulation can also occur on the ACP-tethered intermediate before the thiohydrolase release and lactonization. The C7-hydroxylation by another cytochrome P450 monooxygenase is believed to be the final step in the process to obtain the final structure of BFA. In addition to the HRPKS Bref-PKS and the thiohydrolase Bref-TH, the brefeldin A biosynthesis cluster contains 4 cytochrome p450 monooxygenases (called orf3 to orf6), as well a the probable cluster-specific transcription regulator orf8. The polypeptide is Cytochrome P450 monooxygenase orf4 (Eupenicillium brefeldianum (Penicillium brefeldianum)).